The chain runs to 314 residues: Probable cell division protein WhiA (314 aa).

Residues 274 to 308 (SLKELGEMMSTGKISKSGVNHRLRKLNEMADKLRS) constitute a DNA-binding region (H-T-H motif).

Belongs to the WhiA family.

Involved in cell division and chromosome segregation. This is Probable cell division protein WhiA from Staphylococcus saprophyticus subsp. saprophyticus (strain ATCC 15305 / DSM 20229 / NCIMB 8711 / NCTC 7292 / S-41).